A 26-amino-acid chain; its full sequence is Glycyl-poneratoxin (26 aa).

The residue at position 25 (arginine 25) is an Arginine amide; in delta-paraponeritoxin-Pc1a.

Post-translationally, the glycine-PoTx is a non-amidated form of poneratoxin, with an extra-Gly at C-terminus. This loss of amidation does not alter toxin activity on Nav1.7/SCN9A. In terms of tissue distribution, expressed by the venom gland.

The protein resides in the secreted. Toxin that causes pain in vertebrates by targeting tetrodotoxin (TTX)-sensitive sodium channels in peripheral sensory neurons. Also blocks synaptic transmission and stimulates smooth muscle contraction. Converts the normally rapidly activating and inactivating sodium channel current into one that does not inactivate. Is active on both Nav1.6/SCN8A and Nav1.7/SCN9A sodium channels, with a much potent activity on Nav1.6/SCN8A (EC(50)=97 nM on human channels) than on Nav1.7/SCN9A (EC(50)=2.3 uM on human and EC(50)=1.8 uM on mouse channels). On these channels, causes a sustained current, a reduction in peak current amplitude and a hyperpolarising shift. Modulates Nav1.7/SCN9A in a non-competitive manner with TTX or tetracaine. Toxin-induced persistant current is very slowly reversible with repeated wash steps over 30 minutes. In vivo, shallow intraplantar injection in mice causes immediate, long-lasting and near-maximal nocifensive behaviors, which decrease with coinjection of TTX. When tested on insects, causes paralysis but not mortality at high doses. The chain is Glycyl-poneratoxin from Paraponera clavata (Bullet ant).